Reading from the N-terminus, the 465-residue chain is UDP-N-acetylmuramoylalanine--D-glutamate ligase (465 aa).

127–133 (GSNGKST) is an ATP binding site.

The protein belongs to the MurCDEF family.

It localises to the cytoplasm. The enzyme catalyses UDP-N-acetyl-alpha-D-muramoyl-L-alanine + D-glutamate + ATP = UDP-N-acetyl-alpha-D-muramoyl-L-alanyl-D-glutamate + ADP + phosphate + H(+). Its pathway is cell wall biogenesis; peptidoglycan biosynthesis. Cell wall formation. Catalyzes the addition of glutamate to the nucleotide precursor UDP-N-acetylmuramoyl-L-alanine (UMA). In Cereibacter sphaeroides (strain ATCC 17029 / ATH 2.4.9) (Rhodobacter sphaeroides), this protein is UDP-N-acetylmuramoylalanine--D-glutamate ligase.